The following is a 222-amino-acid chain: Interleukin-12 subunit alpha (222 aa).

A signal peptide spans 1–25 (MCPPRGLLLVTILVLLSHLDHLTWA). Disulfide bonds link Cys40/Cys113, Cys67/Cys199, and Cys88/Cys126. N-linked (GlcNAc...) asparagine glycosylation is found at Asn42, Asn96, and Asn110.

This sequence belongs to the IL-6 superfamily. In terms of assembly, heterodimer with IL12B; disulfide-linked. This heterodimer is known as interleukin IL-12. Heterodimer with EBI3/IL27B; not disulfide-linked. This heterodimer is known as interleukin IL-35. Interacts with NBR1; this interaction promotes IL-12 secretion.

It is found in the secreted. Functionally, heterodimerizes with IL12B to form the IL-12 cytokine or with EBI3/IL27B to form the IL-35 cytokine. IL-12 is primarily produced by professional antigen-presenting cells (APCs) such as B-cells and dendritic cells (DCs) as well as macrophages and granulocytes and regulates T-cell and natural killer-cell responses, induces the production of interferon-gamma (IFN-gamma), favors the differentiation of T-helper 1 (Th1) cells and is an important link between innate resistance and adaptive immunity. Mechanistically, exerts its biological effects through a receptor composed of IL12R1 and IL12R2 subunits. Binding to the receptor results in the rapid tyrosine phosphorylation of a number of cellular substrates including the JAK family kinases TYK2 and JAK2. In turn, recruited STAT4 gets phosphorylated and translocates to the nucleus where it regulates cytokine/growth factor responsive genes. As part of IL-35, plays essential roles in maintaining the immune homeostasis of the liver microenvironment and also functions as an immune-suppressive cytokine. Mediates biological events through unconventional receptors composed of IL12RB2 and gp130/IL6ST heterodimers or homodimers. Signaling requires the transcription factors STAT1 and STAT4, which form a unique heterodimer that binds to distinct DNA sites. This is Interleukin-12 subunit alpha (IL12A) from Canis lupus familiaris (Dog).